The sequence spans 367 residues: Phosphoglycerate kinase (367 aa).

V1, D2, F3, N4, R17, S40, H41, G43, R44, L98, R99, H146, and R147 together coordinate (2R)-3-phosphoglycerate. G190 is an ADP binding site. Residue G190 participates in CDP binding. AMP-binding residues include A191 and K192. A191 contacts ATP. A191 lines the Mg(2+) pocket. Mg(2+) is bound by residues A194 and D195. D195 serves as a coordination point for CDP. AMP is bound at residue K196. K196 is a binding site for ATP. Position 214 (G214) interacts with ADP. CDP is bound at residue G214. Positions 215 and 289 each coordinate AMP. ATP-binding residues include G215 and G289. Positions 314 and 319 each coordinate CDP. F319 contacts ADP. E320 is a binding site for AMP. ATP is bound by residues E320, D351, and T352. D351 contacts Mg(2+).

It belongs to the phosphoglycerate kinase family. As to quaternary structure, monomer. It depends on Mg(2+) as a cofactor.

The catalysed reaction is (2R)-3-phosphoglycerate + ATP = (2R)-3-phospho-glyceroyl phosphate + ADP. Its pathway is carbohydrate degradation; glycolysis; pyruvate from D-glyceraldehyde 3-phosphate: step 2/5. The polypeptide is Phosphoglycerate kinase (PGK) (Paramecium primaurelia).